The sequence spans 256 residues: 5'-nucleotidase SurE (256 aa).

Residues aspartate 8, aspartate 9, serine 40, and asparagine 92 each coordinate a divalent metal cation.

The protein belongs to the SurE nucleotidase family. A divalent metal cation is required as a cofactor.

It localises to the cytoplasm. It catalyses the reaction a ribonucleoside 5'-phosphate + H2O = a ribonucleoside + phosphate. Nucleotidase that shows phosphatase activity on nucleoside 5'-monophosphates. In Allorhizobium ampelinum (strain ATCC BAA-846 / DSM 112012 / S4) (Agrobacterium vitis (strain S4)), this protein is 5'-nucleotidase SurE.